Here is a 573-residue protein sequence, read N- to C-terminus: Probable D-xylulose kinase A (573 aa).

The substrate site is built by H97, R168, D284, and N285. Residues W366, 471 to 472 (GG), and N475 each bind ATP.

Belongs to the FGGY kinase family.

It localises to the cytoplasm. It carries out the reaction D-xylulose + ATP = D-xylulose 5-phosphate + ADP + H(+). Functionally, highly specific D-xylulose kinase which participates in the catabolism of xylose. Xylose is a major component of hemicelluloses such as xylan. Most fungi utilize D-xylose via three enzymatic reactions, xylose reductase (XR), xylitol dehydrogenase (XDH), and xylulokinase, to form xylulose 5-phosphate, which enters pentose phosphate pathway. The polypeptide is Probable D-xylulose kinase A (xkiA) (Aspergillus fumigatus (strain ATCC MYA-4609 / CBS 101355 / FGSC A1100 / Af293) (Neosartorya fumigata)).